A 366-amino-acid polypeptide reads, in one-letter code: Endogenous Bornavirus-like nucleoprotein 1 (366 aa).

Polar residues predominate over residues M1–D15. Residues M1–S22 form a disordered region.

As to expression, expression detected by RT-PCR in a few cell lines, including OL, HEK293T and MOLT-4. Not observed in HeLa cells.

In terms of biological role, may act as an RNA-binding protein. Highly homologous to the bornavirus nucleocapsid N protein that binds viral RNA and oligomerizes. The polypeptide is Endogenous Bornavirus-like nucleoprotein 1 (EBLN1) (Homo sapiens (Human)).